Here is a 180-residue protein sequence, read N- to C-terminus: MSRLKKLYTEEIRKTLQDKFQYENVMQIPVLKKIVISMGLAEAAKDKNLFQAHLEELAVISSQKPLVTRARNSIAGFKLREGQGIGAKVTLRGIRMYDFMDRFCNIVSPRIRDFRGFSCKGDGRGCYSFGLDDQQIFPEVDLDRVKRSQGMNITWVTTAQTDAECLTLLECMGLRFKKAQ.

It belongs to the universal ribosomal protein uL5 family. In terms of assembly, part of the 50S ribosomal subunit; part of the 5S rRNA/L5/L18/L25 subcomplex. Contacts the 5S rRNA and the P site tRNA. Forms a bridge to the 30S subunit in the 70S ribosome.

In terms of biological role, this is one of the proteins that bind and probably mediate the attachment of the 5S RNA into the large ribosomal subunit, where it forms part of the central protuberance. In the 70S ribosome it contacts protein S13 of the 30S subunit (bridge B1b), connecting the 2 subunits; this bridge is implicated in subunit movement. Contacts the P site tRNA; the 5S rRNA and some of its associated proteins might help stabilize positioning of ribosome-bound tRNAs. This chain is Large ribosomal subunit protein uL5, found in Chlamydia trachomatis serovar A (strain ATCC VR-571B / DSM 19440 / HAR-13).